Here is a 519-residue protein sequence, read N- to C-terminus: Keratin, type II cytoskeletal 1b (519 aa).

Residues 1 to 166 are head; it reads MSRQFSSQSA…DPEIQKIKTQ (166 aa). Residues arginine 81 and arginine 95 each carry the omega-N-methylarginine modification. Positions 167-202 are coil 1A; that stretch reads EREQIKTLNNKFASFIDKVRFLEQQNQVLQTKWELL. In terms of domain architecture, IF rod spans 167–480; it reads EREQIKTLNN…ELLEGEESRM (314 aa). Residues 203–221 are linker 1; sequence QQVNTSTRTSSLEPIFEEF. The interval 222–313 is coil 1B; it reads INQLQRQVDV…YLFDTELSQI (92 aa). The tract at residues 314–337 is linker 12; sequence QTHVSDTNVILSMDNNRSLDLDSI. The coil 2 stretch occupies residues 338–476; that stretch reads INAVRTQYEL…ATYRELLEGE (139 aa). A tail region spans residues 477–519; sequence ESRMSGALQSQVSIWALPSNEGNDLGERLHDPQSQVPVPKLGC. Residues 499-519 are disordered; sequence NDLGERLHDPQSQVPVPKLGC.

The protein belongs to the intermediate filament family. In terms of processing, undergoes deimination of some arginine residues (citrullination).

In Rattus norvegicus (Rat), this protein is Keratin, type II cytoskeletal 1b (Krt77).